The primary structure comprises 258 residues: Thiazole synthase (258 aa).

Lysine 100 acts as the Schiff-base intermediate with DXP in catalysis. 1-deoxy-D-xylulose 5-phosphate-binding positions include glycine 161, 187 to 188 (AG), and 209 to 210 (NT).

Belongs to the ThiG family. Homotetramer. Forms heterodimers with either ThiH or ThiS.

It is found in the cytoplasm. The catalysed reaction is [ThiS sulfur-carrier protein]-C-terminal-Gly-aminoethanethioate + 2-iminoacetate + 1-deoxy-D-xylulose 5-phosphate = [ThiS sulfur-carrier protein]-C-terminal Gly-Gly + 2-[(2R,5Z)-2-carboxy-4-methylthiazol-5(2H)-ylidene]ethyl phosphate + 2 H2O + H(+). The protein operates within cofactor biosynthesis; thiamine diphosphate biosynthesis. Catalyzes the rearrangement of 1-deoxy-D-xylulose 5-phosphate (DXP) to produce the thiazole phosphate moiety of thiamine. Sulfur is provided by the thiocarboxylate moiety of the carrier protein ThiS. In vitro, sulfur can be provided by H(2)S. The sequence is that of Thiazole synthase from Campylobacter jejuni subsp. doylei (strain ATCC BAA-1458 / RM4099 / 269.97).